Consider the following 366-residue polypeptide: Protein FAM110B (366 aa).

Disordered stretches follow at residues 127 to 150 (SSEGSSSGSGHKHSSRNWPPHRDT), 163 to 182 (KVYPTPGRGSPQESSSHVSR), and 214 to 253 (IPCSSSAPPLPPKPKVAAMKSPDADQVEPACGVSRRPSLQ). Phosphoserine is present on residues Ser234 and Ser297. A disordered region spans residues 313 to 333 (DCEQSQDSNSDLRNDDSANDR). Over residues 322-331 (SDLRNDDSAN) the composition is skewed to basic and acidic residues.

Belongs to the FAM110 family.

It is found in the cytoplasm. Its subcellular location is the cytoskeleton. The protein resides in the microtubule organizing center. The protein localises to the centrosome. The sequence is that of Protein FAM110B (Fam110b) from Rattus norvegicus (Rat).